A 644-amino-acid polypeptide reads, in one-letter code: Threonine--tRNA ligase (644 aa).

One can recognise a TGS domain in the interval 1 to 61; that stretch reads MPDIQLPDGS…DQDAEVAIVT (61 aa). The catalytic stretch occupies residues 242 to 535; it reads DHRRIGTELE…LIEHYEGKFP (294 aa). The Zn(2+) site is built by Cys335, His386, and His512.

Belongs to the class-II aminoacyl-tRNA synthetase family. In terms of assembly, homodimer. Zn(2+) is required as a cofactor.

It localises to the cytoplasm. It carries out the reaction tRNA(Thr) + L-threonine + ATP = L-threonyl-tRNA(Thr) + AMP + diphosphate + H(+). Its function is as follows. Catalyzes the attachment of threonine to tRNA(Thr) in a two-step reaction: L-threonine is first activated by ATP to form Thr-AMP and then transferred to the acceptor end of tRNA(Thr). Also edits incorrectly charged L-seryl-tRNA(Thr). The chain is Threonine--tRNA ligase from Acidithiobacillus ferrooxidans (strain ATCC 23270 / DSM 14882 / CIP 104768 / NCIMB 8455) (Ferrobacillus ferrooxidans (strain ATCC 23270)).